The primary structure comprises 76 residues: Acyl carrier protein (76 aa).

In terms of domain architecture, Carrier spans 1 to 74 (MFDKLKEIIA…DVVEYITEHT (74 aa)). The residue at position 34 (Ser-34) is an O-(pantetheine 4'-phosphoryl)serine.

This sequence belongs to the acyl carrier protein (ACP) family. Post-translationally, 4'-phosphopantetheine is transferred from CoA to a specific serine of apo-ACP by AcpS. This modification is essential for activity because fatty acids are bound in thioester linkage to the sulfhydryl of the prosthetic group.

It localises to the cytoplasm. The protein operates within lipid metabolism; fatty acid biosynthesis. Functionally, carrier of the growing fatty acid chain in fatty acid biosynthesis. The sequence is that of Acyl carrier protein from Clostridium perfringens (strain ATCC 13124 / DSM 756 / JCM 1290 / NCIMB 6125 / NCTC 8237 / Type A).